Consider the following 96-residue polypeptide: Aspartyl/glutamyl-tRNA(Asn/Gln) amidotransferase subunit C (96 aa).

The tract at residues 64–96 (REDEPEPGLPREEVLKNAPDQQDGQFRVPAILE) is disordered.

This sequence belongs to the GatC family. In terms of assembly, heterotrimer of A, B and C subunits.

It carries out the reaction L-glutamyl-tRNA(Gln) + L-glutamine + ATP + H2O = L-glutaminyl-tRNA(Gln) + L-glutamate + ADP + phosphate + H(+). The enzyme catalyses L-aspartyl-tRNA(Asn) + L-glutamine + ATP + H2O = L-asparaginyl-tRNA(Asn) + L-glutamate + ADP + phosphate + 2 H(+). Its function is as follows. Allows the formation of correctly charged Asn-tRNA(Asn) or Gln-tRNA(Gln) through the transamidation of misacylated Asp-tRNA(Asn) or Glu-tRNA(Gln) in organisms which lack either or both of asparaginyl-tRNA or glutaminyl-tRNA synthetases. The reaction takes place in the presence of glutamine and ATP through an activated phospho-Asp-tRNA(Asn) or phospho-Glu-tRNA(Gln). This chain is Aspartyl/glutamyl-tRNA(Asn/Gln) amidotransferase subunit C, found in Geobacillus thermodenitrificans (strain NG80-2).